A 160-amino-acid polypeptide reads, in one-letter code: MSLTLFAVYFVACACAGATGAIFSPGAWYDSLKKPSWVPPNWLFPVAWSTLYILMSISAARVSGLAMENELAVLGLAFWAVQIAVNTLWTPIFFGLHRLAGGMLVLVLLWLSVFATCVLFWSVDWLSGLMFVPYVIWVTVAGALNFSVWRLNPGEKPITL.

5 consecutive transmembrane segments (helical) span residues 3-23 (LTLFAVYFVACACAGATGAIF), 37-57 (WVPPNWLFPVAWSTLYILMSI), 76-96 (LAFWAVQIAVNTLWTPIFFGL), 101-121 (GGMLVLVLLWLSVFATCVLFW), and 129-149 (LMFVPYVIWVTVAGALNFSVW).

It belongs to the TspO/BZRP family.

The protein resides in the cell inner membrane. It participates in carotenoid biosynthesis; spheroidene biosynthesis. The protein is Protein CrtK (crtK) of Rhodobacter capsulatus (strain ATCC BAA-309 / NBRC 16581 / SB1003).